A 125-amino-acid polypeptide reads, in one-letter code: Cysteine proteinase inhibitor 3 (125 aa).

The first 22 residues, 1 to 22, serve as a signal peptide directing secretion; sequence MESKTFWIVTLLLCGTIQLAIC. A Cystatin domain is found at 36–124; the sequence is GGVHDLRGNQ…KQLQEFKESS (89 aa). The short motif at 80–84 is the Secondary area of contact element; it reads QVVAG.

The protein belongs to the cystatin family. Phytocystatin subfamily.

It is found in the secreted. In terms of biological role, specific inhibitor of cysteine proteinases. Probably involved in the regulation of endogenous processes and in defense against pests and pathogens. The sequence is that of Cysteine proteinase inhibitor 3 (CYS3) from Arabidopsis thaliana (Mouse-ear cress).